Reading from the N-terminus, the 127-residue chain is Large ribosomal subunit protein bL19 (127 aa).

Belongs to the bacterial ribosomal protein bL19 family.

Its function is as follows. This protein is located at the 30S-50S ribosomal subunit interface and may play a role in the structure and function of the aminoacyl-tRNA binding site. The protein is Large ribosomal subunit protein bL19 of Bradyrhizobium sp. (strain BTAi1 / ATCC BAA-1182).